The following is a 291-amino-acid chain: Aspartate carbamoyltransferase catalytic subunit (291 aa).

Carbamoyl phosphate-binding residues include Arg-49 and Thr-50. Lys-77 provides a ligand contact to L-aspartate. Residues Arg-99, His-127, and Gln-130 each coordinate carbamoyl phosphate. L-aspartate is bound by residues Arg-160 and Arg-210. Carbamoyl phosphate is bound by residues Gly-249 and Pro-250.

This sequence belongs to the aspartate/ornithine carbamoyltransferase superfamily. ATCase family. As to quaternary structure, heterododecamer (2C3:3R2) of six catalytic PyrB chains organized as two trimers (C3), and six regulatory PyrI chains organized as three dimers (R2).

The catalysed reaction is carbamoyl phosphate + L-aspartate = N-carbamoyl-L-aspartate + phosphate + H(+). The protein operates within pyrimidine metabolism; UMP biosynthesis via de novo pathway; (S)-dihydroorotate from bicarbonate: step 2/3. Functionally, catalyzes the condensation of carbamoyl phosphate and aspartate to form carbamoyl aspartate and inorganic phosphate, the committed step in the de novo pyrimidine nucleotide biosynthesis pathway. This Sulfurimonas denitrificans (strain ATCC 33889 / DSM 1251) (Thiomicrospira denitrificans (strain ATCC 33889 / DSM 1251)) protein is Aspartate carbamoyltransferase catalytic subunit.